Consider the following 80-residue polypeptide: UPF0512 protein Q (80 aa).

It belongs to the UPF0512 family.

The polypeptide is UPF0512 protein Q (Dictyostelium discoideum (Social amoeba)).